Here is a 563-residue protein sequence, read N- to C-terminus: MADYNTLYHQGLYLSPDQQDLLLAALSSNQPPQKQQNDKQRSQAKTDPDSTPGNMSSGSFSMSPGFNKTHPGSGGLGYGDDESPFLDFNPELDFDFPGSENLIGDLPGSLPSEEHEVGEKRKDMSDNENEESGKKRRESDDKAAKKPGRKPLTSEPTSKRKAQNRAAQRAFRERKEKHLKDLETKVDELQKASDDANQENGLLRAQVERLQVELREYRKRLSWLTTGSGISAMSAIPSAHSRNLYGLNNNDFMFDFPKFGDLPGGHIFNGPLTKSNQNKPRDGSSPATSDSQVPGVMTRETLNGSNNRGMPTAKAANGVSNNPSPKVPSVYNIRQSASSHDSSNSCSPSSSSDSHQSQMLSSNGTSPEPSSNSPATKLNDSVQNHHACTYSTIDAVRGKSESVSNTPSQPNNNYEQTPGPGLDLLAQQNGGQFDPVLFGDWREPQDAILSQDFGTFFDDAFPLPDLGSPSHNFNEVANPQPPKKDLIAEIDNKLDEEVVPGEDKSQMLSCTKIWDRLQSMEKFRNGEIDVDNLCSELRTKARCSEGGVVVNQKDVEDIMGRVK.

The segment at 23–179 (LAALSSNQPP…AFRERKEKHL (157 aa)) is disordered. The short motif at 35–42 (QQNDKQRS) is the Bipartite nuclear localization signal element. Over residues 36-48 (QNDKQRSQAKTDP) the composition is skewed to basic and acidic residues. Positions 52–67 (PGNMSSGSFSMSPGFN) are enriched in low complexity. Residues 68–75 (KTHPGSGG) carry the Bipartite nuclear localization signal motif. Over residues 79 to 94 (GDDESPFLDFNPELDF) the composition is skewed to acidic residues. 2 stretches are compositionally biased toward basic and acidic residues: residues 112–144 (SEEH…DKAA) and 170–179 (AFRERKEKHL). The bZIP domain occupies 154 to 217 (SEPTSKRKAQ…ERLQVELREY (64 aa)). The basic motif stretch occupies residues 159–180 (KRKAQNRAAQRAFRERKEKHLK). The tract at residues 182–189 (LETKVDEL) is leucine-zipper. A transcription activation 1 region spans residues 211–332 (QVELREYRKR…PSPKVPSVYN (122 aa)). Disordered regions lie at residues 267 to 380 (IFNG…KLND) and 394 to 420 (DAVR…TPGP). The n-CRD stretch occupies residues 284-296 (SSPATSDSQVPGV). Residues 300–309 (ETLNGSNNRG) show a composition bias toward polar residues. Low complexity predominate over residues 336 to 362 (SASSHDSSNSCSPSSSSDSHQSQMLSS). 2 stretches are compositionally biased toward polar residues: residues 363-380 (NGTS…KLND) and 401-416 (ESVS…NYEQ). Residues 377 to 459 (KLNDSVQNHH…SQDFGTFFDD (83 aa)) form a transcription activation 2 region. Disulfide bonds link cysteine 510-cysteine 534, cysteine 510-cysteine 543, and cysteine 534-cysteine 543. The c-CRD stretch occupies residues 510–543 (CTKIWDRLQSMEKFRNGEIDVDNLCSELRTKARC). Positions 528–535 (IDVDNLCS) match the Nuclear export signal motif.

The protein belongs to the bZIP family. YAP subfamily. In terms of processing, depending on the oxidative stress inducing agent, yap1 can undergo two distinct conformational changes, both involving disulfide bond formation, and both masking the nuclear export signal, thus abolishing nuclear export.

It localises to the nucleus. It is found in the cytoplasm. Transcription activator involved in oxidative stress response and redox homeostasis. Regulates the transcription of genes encoding antioxidant enzymes and components of the cellular thiol-reducing pathways. The chain is AP-1-like transcription factor yap1 from Aspergillus oryzae (strain ATCC 42149 / RIB 40) (Yellow koji mold).